The chain runs to 2628 residues: Protein FMP27, mitochondrial (2628 aa).

The first 28 residues, Met-1 to Arg-28, serve as a signal peptide directing secretion. The segment at Lys-29 to Met-192 is transmembrane domain. LRR repeat units follow at residues Phe-160–Val-182, Pro-213–Gln-236, Ile-271–Glu-296, Tyr-306–Glu-333, Asn-571–Asn-596, Val-835–His-857, Phe-1944–Phe-1967, Phe-2101–Lys-2125, and Ile-2303–Lys-2327.

The protein resides in the cell membrane. The protein localises to the endoplasmic reticulum membrane. Its subcellular location is the mitochondrion membrane. Its function is as follows. Tube-forming lipid transport protein which binds to phosphatidylinositols and affects phosphatidylinositol-4,5-bisphosphate (PtdIns-4,5-P2) distribution. The sequence is that of Protein FMP27, mitochondrial from Saccharomyces cerevisiae (strain ATCC 204508 / S288c) (Baker's yeast).